We begin with the raw amino-acid sequence, 293 residues long: Acetylglutamate kinase (293 aa).

Substrate contacts are provided by residues 65–66 (GG), Arg-87, and Asn-188.

This sequence belongs to the acetylglutamate kinase family. ArgB subfamily.

The protein resides in the cytoplasm. It catalyses the reaction N-acetyl-L-glutamate + ATP = N-acetyl-L-glutamyl 5-phosphate + ADP. The protein operates within amino-acid biosynthesis; L-arginine biosynthesis; N(2)-acetyl-L-ornithine from L-glutamate: step 2/4. Catalyzes the ATP-dependent phosphorylation of N-acetyl-L-glutamate. This Symbiobacterium thermophilum (strain DSM 24528 / JCM 14929 / IAM 14863 / T) protein is Acetylglutamate kinase.